A 294-amino-acid polypeptide reads, in one-letter code: 2-dehydropantoate 2-reductase (294 aa).

Residues glycine 10–glycine 15, arginine 34, lysine 74, asparagine 98, and alanine 122 each bind NADP(+). Lysine 178 (proton donor) is an active-site residue. Residues lysine 178, asparagine 182, asparagine 186, asparagine 196, and asparagine 243 to serine 246 each bind substrate. Glutamate 258 is an NADP(+) binding site.

This sequence belongs to the ketopantoate reductase family.

The protein localises to the cytoplasm. It catalyses the reaction (R)-pantoate + NAD(+) = 2-dehydropantoate + NADH + H(+). The catalysed reaction is (R)-pantoate + NADP(+) = 2-dehydropantoate + NADPH + H(+). It participates in cofactor biosynthesis; coenzyme A biosynthesis. Its function is as follows. Catalyzes the NAD(P)H-dependent reduction of ketopantoate into pantoic acid. The polypeptide is 2-dehydropantoate 2-reductase (Archaeoglobus fulgidus (strain ATCC 49558 / DSM 4304 / JCM 9628 / NBRC 100126 / VC-16)).